The sequence spans 147 residues: Small ribosomal subunit protein uS5 (147 aa).

Residues 9 to 72 (FEEVIVDIGR…DDAFKNIIHV (64 aa)) enclose the S5 DRBM domain.

It belongs to the universal ribosomal protein uS5 family. As to quaternary structure, part of the 30S ribosomal subunit. Contacts proteins S4 and S8.

In terms of biological role, with S4 and S12 plays an important role in translational accuracy. Its function is as follows. Located at the back of the 30S subunit body where it stabilizes the conformation of the head with respect to the body. This chain is Small ribosomal subunit protein uS5, found in Campylobacter concisus (strain 13826).